We begin with the raw amino-acid sequence, 838 residues long: Histidine biosynthesis trifunctional protein (838 aa).

Residues 1–271 (MIFPILPVIS…MVEPRTGYGF (271 aa)) form a phosphoribosyl-AMP cyclohydrolase region. The segment at 272 to 360 (CHRETKFTCF…VYFAMVWCIK (89 aa)) is phosphoribosyl-ATP pyrophosphohydrolase. Positions 361–838 (HGVRLADIEK…IRMERMAETK (478 aa)) are histidinol dehydrogenase. Zn(2+) is bound by residues Gln660 and His663. Active-site residues include Glu729 and His730. Positions 764 and 823 each coordinate Zn(2+).

This sequence in the C-terminal section; belongs to the histidinol dehydrogenase family. Requires Zn(2+) as cofactor.

It carries out the reaction 1-(5-phospho-beta-D-ribosyl)-5'-AMP + H2O = 1-(5-phospho-beta-D-ribosyl)-5-[(5-phospho-beta-D-ribosylamino)methylideneamino]imidazole-4-carboxamide. The enzyme catalyses 1-(5-phospho-beta-D-ribosyl)-ATP + H2O = 1-(5-phospho-beta-D-ribosyl)-5'-AMP + diphosphate + H(+). It catalyses the reaction L-histidinol + 2 NAD(+) + H2O = L-histidine + 2 NADH + 3 H(+). Its pathway is amino-acid biosynthesis; L-histidine biosynthesis; L-histidine from 5-phospho-alpha-D-ribose 1-diphosphate: step 2/9. It participates in amino-acid biosynthesis; L-histidine biosynthesis; L-histidine from 5-phospho-alpha-D-ribose 1-diphosphate: step 3/9. It functions in the pathway amino-acid biosynthesis; L-histidine biosynthesis; L-histidine from 5-phospho-alpha-D-ribose 1-diphosphate: step 9/9. The polypeptide is Histidine biosynthesis trifunctional protein (HIS4) (Candida albicans (Yeast)).